The following is a 227-amino-acid chain: MNHLDRLERKIGYRFNDIALLKQALTHRSAATQHNERLEFLGDSILNFTIAEALYHQFPRCNEGELSRMRATLVREPTLAILARQFELGDYMSLGSGELKNGGFRRESILADCVEAIIGAMSLDQGLAVTTQVIRNWYQQLLAEIKPGDNQKDAKTRLQEYLQGKHLPLPTYEVVNIQGEAHCQIFTVKCKVKSAEKIDRTFVAKGSSRRKAEQAAAEQILKELDIK.

The region spanning 4 to 126 is the RNase III domain; that stretch reads LDRLERKIGY…IIGAMSLDQG (123 aa). Glutamate 39 is a binding site for Mg(2+). Aspartate 43 is an active-site residue. Mg(2+)-binding residues include aspartate 112 and glutamate 115. Glutamate 115 is a catalytic residue. The region spanning 153–226 is the DRBM domain; it reads DAKTRLQEYL…AEQILKELDI (74 aa).

This sequence belongs to the ribonuclease III family. In terms of assembly, homodimer. The cofactor is Mg(2+).

The protein resides in the cytoplasm. The catalysed reaction is Endonucleolytic cleavage to 5'-phosphomonoester.. Digests double-stranded RNA. Involved in the processing of primary rRNA transcript to yield the immediate precursors to the large and small rRNAs (23S and 16S). Processes some mRNAs, and tRNAs when they are encoded in the rRNA operon. Processes pre-crRNA and tracrRNA of type II CRISPR loci if present in the organism. The polypeptide is Ribonuclease 3 (Haemophilus influenzae (strain ATCC 51907 / DSM 11121 / KW20 / Rd)).